Reading from the N-terminus, the 323-residue chain is Aquaporin-4 (323 aa).

Over 1–36 (MSDGAAARRWGKCGPPCSRESIMVAFKGVWTQAFWK) the chain is Cytoplasmic. Residues cysteine 13 and cysteine 17 are each lipidated (S-palmitoyl cysteine). A helical transmembrane segment spans residues 37–57 (AVTAEFLAMLIFVLLSVGSTI). Topologically, residues 58–69 (NWGGSENPLPVD) are extracellular. The helical transmembrane segment at 70-89 (MVLISLCFGLSIATMVQCFG) threads the bilayer. Residues 90 to 93 (HISG) are Cytoplasmic-facing. Positions 94–101 (GHINPAVT) form an intramembrane region, discontinuously helical. The short motif at 97–99 (NPA) is the NPA 1 element. The Cytoplasmic portion of the chain corresponds to 102–115 (VAMVCTRKISIAKS). Serine 111 carries the phosphoserine; by PKG modification. A helical transmembrane segment spans residues 116 to 136 (VFYITAQCLGAIIGAGILYLV). Residues 137 to 155 (TPPSVVGGLGVTTVHGNLT) are Extracellular-facing. A glycan (N-linked (GlcNAc...) asparagine) is linked at asparagine 153. The chain crosses the membrane as a helical span at residues 156 to 176 (AGHGLLVELIITFQLVFTIFA). Residues 177 to 184 (SCDSKRTD) lie on the Cytoplasmic side of the membrane. Serine 180 carries the phosphoserine; by PKC modification. A helical membrane pass occupies residues 185-205 (VTGSVALAIGFSVAIGHLFAI). Residues 206–208 (NYT) are Extracellular-facing. The segment at residues 209–222 (GASMNPARSFGPAV) is an intramembrane region (discontinuously helical). Positions 213–215 (NPA) match the NPA 2 motif. Topologically, residues 223 to 231 (IMGNWENHW) are extracellular. Residues 232-252 (IYWVGPIIGAVLAGALYEYVF) traverse the membrane as a helical segment. Residues 253 to 323 (CPDVELKRRL…DSSGEVLSSV (71 aa)) are Cytoplasmic-facing. A phosphoserine mark is found at serine 276 and serine 285. Threonine 289 carries the post-translational modification Phosphothreonine. Serine 321 is subject to Phosphoserine.

It belongs to the MIP/aquaporin (TC 1.A.8) family. As to quaternary structure, homotetramer. The tetramers can form oligomeric arrays in membranes. The size of the oligomers differs between tissues and is smaller in skeletal muscle than in brain. Interaction between AQP4 oligomeric arrays in close-by cells can contribute to cell-cell adhesion. Part of a complex containing MLC1, TRPV4, HEPACAM and ATP1B1. Post-translationally, phosphorylation by PKC at Ser-180 promotes internalization from the cell membrane, reducing the conductance by 50%. Phosphorylation by PKG at Ser-111 in response to glutamate increases conductance by 40%. In terms of processing, isoform Long: Palmitoylated on its N-terminal region. Isoform 3: Not palmitoylated. As to expression, detected in cerebellum. Detected on pericapillary astrocyte endfeet in cerebellum, and in skeletal muscle. Detected in glial lamellae in the hypothalamus (at protein level). Abundant in mature brain cortex, cerebellum and spinal cord. Highly expressed in the ependymal cell lining the aqueductal system and over the space of the brain in contact with the subarachnoid space. Detected in paraventricular and supraoptic nuclei, the granule cell layer of the dentate gyrus and the Purkinje cell layer in the cerebellum. Only weakly detectable in eye, kidney, intestine, and lung.

The protein resides in the cell membrane. The protein localises to the basolateral cell membrane. Its subcellular location is the endosome membrane. It is found in the sarcolemma. It localises to the cell projection. The catalysed reaction is H2O(in) = H2O(out). Forms a water-specific channel. Plays an important role in brain water homeostasis and in glymphatic solute transport. Required for a normal rate of water exchange across the blood brain interface. Required for normal levels of cerebrospinal fluid influx into the brain cortex and parenchyma along paravascular spaces that surround penetrating arteries, and for normal drainage of interstitial fluid along paravenous drainage pathways. Thereby, it is required for normal clearance of solutes from the brain interstitial fluid, including soluble beta-amyloid peptides derived from APP. Plays a redundant role in urinary water homeostasis and urinary concentrating ability. The protein is Aquaporin-4 (Aqp4) of Rattus norvegicus (Rat).